Consider the following 102-residue polypeptide: Secreted RxLR effector protein 61 (102 aa).

Residues 1–22 (MAFQLRIVQHLLHITFLRLPLA) form the signal peptide. Positions 51 to 60 (RRLRQLNEHR) match the RxLR-dEER motif.

The protein belongs to the RxLR effector family.

The protein resides in the secreted. It localises to the host chloroplast envelope. The protein localises to the host cytoplasm. It is found in the host nucleus. Functionally, effector that partially suppresses the tobacco programmed cell death induced by cell death-inducing proteins. In Plasmopara viticola (Downy mildew of grapevine), this protein is Secreted RxLR effector protein 61.